The chain runs to 78 residues: Protein SlyX homolog (78 aa).

This sequence belongs to the SlyX family.

The sequence is that of Protein SlyX homolog from Xanthomonas oryzae pv. oryzae (strain MAFF 311018).